The chain runs to 957 residues: MAAQKIRSANINGLPRCKSEGTLIDFSGVPDPSLSEVKVLSPSSLRIDNPASLENVKEVVAIKDYCPNNFTTLKFSKGEHLYVLDASGGDWWYAHNSTEMGYIPSSYVQPLNYRDSCLSDSGMIDGLLENVDEGVKELDLLGDWTDSFNQDSVKKSHNNPFLRPSVSNPFLNGPLVSQTHAADTENSVDLLLFDPLAPSHVIASETSTDMLVNLLPNTTPNKVAVAVKRDNSFFRSKRSYSLSELSVLQAKSEGPTTGSFFAGLKSPAPEQFQSREDFRTAWLNHRKLARSCHDLDLLGQNPGWGQTQPVETSIVCRLDSSGGAVQLPDTNISIHVPEKHVASGETQQISLKALLDPPLELNNDKCTTVSPVLEIKLSNMDVHCPLTLELRISVALGGNASALNMVGIKCLRSDAREGPYNPVTQIYMYGDTVQVKLDNLEPVMYVVMVAQGQGIVSPSSVWEYINKKVTVGLYGPKHIHPSFKAVLAIFGHDCAPKSLLVNEVGQQANNPAPVTLQLWGKQQFVLPKPQDVQLCLFSNMTNYRVDAGDQGKIVRGFQLKLGKVSRLIFPIICQDPDQLSDFTLRVQVRDEFGGVLSQYCVQTPRPLPKTGTKSTGPRRFLKKKELGKIVLSPLAITCKYPTFQDRPVTSLKYGKLLKTVVRQSKNPYLLEYKKGDVIGLLSEEKIRLKGQLWNKEWYIGYYQGKLGLVHAKNVLVVGKVKPSFFSGPELTTGLLLEQILRPCKFLTYIYASVRTLLMENIGSWRCFADALGYGNLPLSYFCRVELESETERVASVLEKLKEECNSEGKEKKSFQKELIMALLKIDCQGLVVRLIQDFVLLTTAVEVAARWRELSEKLARVSKQQMDGYEAPHRDRNGMLDSEAMWKPAYDFLLTWSAQIGESYRDVIQELHTGLDKMRSPITKRWKHLTGTLILVNSLDILRATAFSTEAPEDCII.

Residues 54–113 (ENVKEVVAIKDYCPNNFTTLKFSKGEHLYVLDASGGDWWYAHNSTEMGYIPSSYVQPLNY) enclose the SH3 1 domain. In terms of domain architecture, ZU5 spans 312-449 (TSIVCRLDSS…LEPVMYVVMV (138 aa)). Residues 649 to 719 (TSLKYGKLLK…HAKNVLVVGK (71 aa)) form the SH3 2 domain.

As to quaternary structure, homodimer or homooligomer.

It localises to the membrane. The protein resides in the clathrin-coated pit. It is found in the cytoplasmic vesicle. The protein localises to the clathrin-coated vesicle. Its subcellular location is the nucleus. Functionally, possible role in regulating endocytosis of the transferrin receptor at the plasma membrane. Alternatively, may function as a negative regulator of the amino acid-induced TOR signaling by inhibiting the formation of active Rag GTPase complexes. Preferentially binds inactive Rag GTPase complexes and prevents their interaction with the mTORC1 complex inhibiting its relocalization to lysosomes and its activation. Thereby, may indirectly regulate cell growth, proliferation and autophagy. The polypeptide is SH3 domain-binding protein 4-A (sh3bp4-a) (Xenopus laevis (African clawed frog)).